Consider the following 101-residue polypeptide: Small ribosomal subunit protein uS14 (101 aa).

A compositionally biased stretch (basic and acidic residues) spans 1 to 10 (MAKKSSVEKN). Residues 1–23 (MAKKSSVEKNNRRKRMAKNAAPK) form a disordered region. Over residues 11–23 (NRRKRMAKNAAPK) the composition is skewed to basic residues.

The protein belongs to the universal ribosomal protein uS14 family. Part of the 30S ribosomal subunit. Contacts proteins S3 and S10.

Functionally, binds 16S rRNA, required for the assembly of 30S particles and may also be responsible for determining the conformation of the 16S rRNA at the A site. The protein is Small ribosomal subunit protein uS14 of Bradyrhizobium sp. (strain BTAi1 / ATCC BAA-1182).